We begin with the raw amino-acid sequence, 419 residues long: uncharacterized protein (419 aa).

Transmembrane regions (helical) follow at residues 1–21 (MTTVSAIGALVALIVAIFLIL), 24–44 (VSPAYGMLVGALVGGLIGGAD), 66–86 (ILAAGVLAGVLIESGAANSIT), 101–121 (ALALATMILTAVGVFVDVAVI), 174–194 (SVMMAGIIPALFGLILTYFLA), 216–236 (NLPSFLTALVAPLVAILLLAL), 242–262 (IKVDPLIALPLGGLIGAFCMG), 280–300 (PVAIMLLGTGALAGIIANSGL), 311–331 (SGLPSYILAPISGVLMSLATA), 349–369 (LELGVSSLAGAAMIHAGATVF), and 396–416 (IPYESAVGLMMTIVSTLIFGV).

It belongs to the CitM (TC 2.A.11) transporter family.

The protein resides in the cell membrane. This is an uncharacterized protein from Haemophilus influenzae (strain ATCC 51907 / DSM 11121 / KW20 / Rd).